Reading from the N-terminus, the 162-residue chain is Protein archease (162 aa).

Positions 34, 161, and 162 each coordinate Ca(2+).

Belongs to the archease family. As to quaternary structure, component of the tRNA-splicing ligase complex.

Component of the tRNA-splicing ligase complex required to facilitate the enzymatic turnover of catalytic subunit RTCB. Together with ddx1, acts by facilitating the guanylylation of RTCB, a key intermediate step in tRNA ligation. In Ictalurus punctatus (Channel catfish), this protein is Protein archease.